The sequence spans 540 residues: Glucose-6-phosphate isomerase (540 aa).

The active-site Proton donor is Glu350. Residues His381 and Lys503 contribute to the active site.

The protein belongs to the GPI family.

The protein localises to the cytoplasm. The enzyme catalyses alpha-D-glucose 6-phosphate = beta-D-fructose 6-phosphate. It participates in carbohydrate biosynthesis; gluconeogenesis. The protein operates within carbohydrate degradation; glycolysis; D-glyceraldehyde 3-phosphate and glycerone phosphate from D-glucose: step 2/4. Functionally, catalyzes the reversible isomerization of glucose-6-phosphate to fructose-6-phosphate. The protein is Glucose-6-phosphate isomerase of Burkholderia mallei (strain NCTC 10247).